The primary structure comprises 421 residues: Monopolin complex subunit mde4 (421 aa).

2 disordered regions span residues 122-158 (QKSN…NKDE) and 224-316 (DRKL…MTVS). Residues 133 to 149 (VSQNRLRGSLDTVSSPS) show a composition bias toward polar residues. Over residues 224–238 (DRKLRMQKKSTERKS) the composition is skewed to basic and acidic residues. The span at 262-287 (RQPNATSGSPLSVTPFLQKTSTSIGL) shows a compositional bias: polar residues. A compositionally biased stretch (low complexity) spans 288–304 (SSSPPQSSPSAQSSQPF).

In terms of assembly, component of a monopolin-like complex composed of pcs1 and mde4. The complex associates with the kinetochore.

It is found in the nucleus. The protein resides in the chromosome. It localises to the centromere. Its function is as follows. The monopolin-like pcs1/mde4 complex is essential for accurate chromosome segregation during mitosis and meiosis II. May clamp together microtubule binding sites on the same kinetochore, preventing merotelic attachment of microtubules. In Schizosaccharomyces pombe (strain 972 / ATCC 24843) (Fission yeast), this protein is Monopolin complex subunit mde4 (mde4).